A 278-amino-acid chain; its full sequence is Pca operon regulatory protein (278 aa).

Residues 31–91 (VAGISKGMAI…SDGHYFYLTP (61 aa)) form the HTH iclR-type domain. Positions 53 to 72 (ITMAAEKTGMTRAAARRHLL) form a DNA-binding region, H-T-H motif. One can recognise an IclR-ED domain in the interval 106–278 (LPKISQPLLN…ETARELRNIL (173 aa)).

In terms of biological role, activates transcription of the pca operon. The chain is Pca operon regulatory protein (pcaU) from Acinetobacter baylyi (strain ATCC 33305 / BD413 / ADP1).